The primary structure comprises 854 residues: Cell division control protein 24 (854 aa).

Residues 1–14 are compositionally biased toward polar residues; it reads MAIQTRFASGTSLS. Positions 1–24 are disordered; it reads MAIQTRFASGTSLSDLKPKPSATS. The region spanning 135–246 is the Calponin-homology (CH) domain; that stretch reads PNMEDTLLTF…VVETLMNSSP (112 aa). Residues 278–454 enclose the DH domain; that stretch reads EYVKIIKEFV…KNIARSINEN (177 aa). Positions 478-668 constitute a PH domain; the sequence is RISKFGELLY…WSSCLQQLIH (191 aa). Disordered stretches follow at residues 542 to 571 and 674 to 745; these read ISAS…SNNI and QFKA…FESE. Residues 682-707 show a composition bias toward low complexity; the sequence is STSTTSSTAKSSSMMSPTTTMNTPNH. Residues 761 to 854 form the PB1 domain; that stretch reads SILFRISYNN…NEKFLNIRLY (94 aa).

Interacts with AXL2.

Functionally, promotes the exchange of CDC42-bound GDP by GTP. Controls the polarity of calmodulin, and the calcium regulatory process of bud emergence. CDC24 may be involved in the initial selection and organization of the budding site. In Saccharomyces cerevisiae (strain ATCC 204508 / S288c) (Baker's yeast), this protein is Cell division control protein 24 (CDC24).